Reading from the N-terminus, the 261-residue chain is High-affinity zinc uptake system membrane protein ZnuB (261 aa).

7 consecutive transmembrane segments (helical) span residues 5–27 (FFFGWLAGVLLTTITGPLGLFII), 48–70 (FAVLLNIHPFFMVIITILLFGML), 85–107 (ILGIIGYSFLSLGMIIINSISNF), 128–150 (IVILIISCVSILFVLVWYWDLML), 172–194 (ILIFLITLTIGIAIKFIGSLIAI), 215–234 (AFFSVIIGIISITWGILMSV), and 238–257 (LAISPTIVFCSSIVFVISNL).

The protein belongs to the ABC-3 integral membrane protein family.

The protein localises to the cell membrane. In terms of biological role, involved in the high-affinity zinc uptake transport system. The sequence is that of High-affinity zinc uptake system membrane protein ZnuB (znuB) from Buchnera aphidicola subsp. Baizongia pistaciae (strain Bp).